Reading from the N-terminus, the 51-residue chain is Large ribosomal subunit protein bL33 (51 aa).

The protein belongs to the bacterial ribosomal protein bL33 family.

This chain is Large ribosomal subunit protein bL33, found in Pseudoalteromonas atlantica (strain T6c / ATCC BAA-1087).